A 645-amino-acid polypeptide reads, in one-letter code: Heat shock protein SSA2 (645 aa).

An N-acetylserine modification is found at Ser2. Residues 581 to 645 form a disordered region; the sequence is ANQTATQEEF…NDGPTVEEVD (65 aa). Positions 611–621 are enriched in low complexity; it reads AGATPSGAAGA.

Belongs to the heat shock protein 70 family. As to quaternary structure, binds human histatin-5, an antifungal peptide from saliva.

It is found in the cytoplasm. It localises to the secreted. Its subcellular location is the cell wall. Functionally, heat shock protein that may play a role in the transport of polypeptides both across the mitochondrial membranes and into the endoplasmic reticulum. Acts as a highly immunodominant antigen. Plays a role in the sensitivity to, and the import of candidacidal beta-defensin peptides. HSP70/SSA1 and SSA2 bind histatin-5, a peptide from human saliva, and mediates its fungicidal activity. SSA2 facilitates fungicidal activity of Hst 5 in binding and intracellular translocation, whereas HSP70/SSA1 appears to have a lesser functional role in Hst 5 toxicity. This is Heat shock protein SSA2 from Candida albicans (strain SC5314 / ATCC MYA-2876) (Yeast).